The chain runs to 449 residues: Trigger factor (449 aa).

Positions 173-258 constitute a PPIase FKBP-type domain; sequence GDRVTVDFVG…MKKVEWPHLP (86 aa).

Belongs to the FKBP-type PPIase family. Tig subfamily.

The protein localises to the cytoplasm. The catalysed reaction is [protein]-peptidylproline (omega=180) = [protein]-peptidylproline (omega=0). In terms of biological role, involved in protein export. Acts as a chaperone by maintaining the newly synthesized protein in an open conformation. Functions as a peptidyl-prolyl cis-trans isomerase. This is Trigger factor from Burkholderia thailandensis (strain ATCC 700388 / DSM 13276 / CCUG 48851 / CIP 106301 / E264).